Consider the following 109-residue polypeptide: Large ribosomal subunit protein uL22 (109 aa).

This sequence belongs to the universal ribosomal protein uL22 family. Part of the 50S ribosomal subunit.

Functionally, this protein binds specifically to 23S rRNA; its binding is stimulated by other ribosomal proteins, e.g. L4, L17, and L20. It is important during the early stages of 50S assembly. It makes multiple contacts with different domains of the 23S rRNA in the assembled 50S subunit and ribosome. Its function is as follows. The globular domain of the protein is located near the polypeptide exit tunnel on the outside of the subunit, while an extended beta-hairpin is found that lines the wall of the exit tunnel in the center of the 70S ribosome. The protein is Large ribosomal subunit protein uL22 of Aromatoleum aromaticum (strain DSM 19018 / LMG 30748 / EbN1) (Azoarcus sp. (strain EbN1)).